Reading from the N-terminus, the 444-residue chain is NAD-capped RNA hydrolase NUDT12 (444 aa).

2 ANK repeats span residues 11–40 (EIIS…SLLN) and 60–80 (SRQT…ANLL). Residue Lys-167 is modified to N6-succinyllysine. Cys-266 and Cys-269 together coordinate Zn(2+). At Lys-274 the chain carries N6-succinyllysine. Residues Cys-284 and Cys-289 each contribute to the Zn(2+) site. Residues Tyr-300, 336-338 (AGF), Glu-352, Glu-356, and Glu-397 contribute to the substrate site. In terms of domain architecture, Nudix hydrolase spans 301-435 (PRVDPVVIMQ…SRAIAHQLIK (135 aa)). Ala-336, Glu-352, Glu-356, and Glu-397 together coordinate Mg(2+). Residues 337-358 (GFIEPGETIEDAVRREVEEESG) carry the Nudix box motif. A Microbody targeting signal motif is present at residues 442–444 (PNL).

Belongs to the Nudix hydrolase family. NudC subfamily. As to quaternary structure, homodimer. Homodimerization is essential for its catalytic activity and protein stability. Interacts (via ANK repeats) with BLMH. Requires Mg(2+) as cofactor. The cofactor is Zn(2+).

It is found in the cytoplasm. Its subcellular location is the peroxisome. It localises to the cytoplasmic granule. The enzyme catalyses a 5'-end NAD(+)-phospho-ribonucleoside in mRNA + H2O = a 5'-end phospho-adenosine-phospho-ribonucleoside in mRNA + beta-nicotinamide D-ribonucleotide + 2 H(+). The catalysed reaction is NAD(+) + H2O = beta-nicotinamide D-ribonucleotide + AMP + 2 H(+). It catalyses the reaction NADH + H2O = reduced beta-nicotinamide D-ribonucleotide + AMP + 2 H(+). It carries out the reaction NADPH + H2O = reduced beta-nicotinamide D-ribonucleotide + adenosine 2',5'-bisphosphate + 2 H(+). Its function is as follows. mRNA decapping enzyme that specifically removes the nicotinamide adenine dinucleotide (NAD) cap from a subset of mRNAs by hydrolyzing the diphosphate linkage to produce nicotinamide mononucleotide (NMN) and 5' monophosphate mRNA. The NAD-cap is present at the 5'-end of some RNAs; in contrast to the canonical N7 methylguanosine (m7G) cap, the NAD cap promotes mRNA decay. Preferentially acts on NAD-capped transcripts in response to nutrient stress. Also acts on free nicotinamide adenine dinucleotide molecules: hydrolyzes NAD(H) into NMN(H) and AMP, and NADPH into NMNH and 2',5'-ADP. May act to regulate the concentration of peroxisomal nicotinamide nucleotide cofactors required for oxidative metabolism in this organelle. Regulates the levels of circadian clock components PER1, PER2, PER3 and CRY2 in the liver. This is NAD-capped RNA hydrolase NUDT12 from Bos taurus (Bovine).